A 324-amino-acid chain; its full sequence is MMNDTITPEPHLVPGYTGHCTENRDRVGKTYGKQTHKLLIDPCIYHAPELIVLPIHAKQGLKDYPTEHELKVLRRREDLVDAVYRHPILPGYAGFVPNMASQTGKRYVAAASAGVAQHETLMELYRCENRTLRHRDLLESGKGLFERKLNERLLPQARYRSPLIPVTGRSKGVKDEECPPRVDKLRYSKFTSPHFLEDDDDDKFIINGYAAHIPMAVTRFGESNQVLTHRALCSFSDYMYKRKRDAWCCGQDLTRPAVTCPPVGHFVIYHDDIGMVPSYAGHVPGELYKFGRTYGKTTINAKRWLDIHRGLTGLPEVSNLDYTY.

This sequence belongs to the CIMIP2 family.

The protein localises to the cytoplasm. It localises to the cytoskeleton. The protein resides in the cilium axoneme. Functionally, probable microtubule inner protein (MIP) part of the dynein-decorated doublet microtubules (DMTs) in cilium axoneme. The protein is CIMIP2 protein GA14893 of Drosophila pseudoobscura pseudoobscura (Fruit fly).